Consider the following 204-residue polypeptide: Thymidylate kinase (204 aa).

10 to 17 provides a ligand contact to ATP; it reads GGDGAGKT.

The protein belongs to the thymidylate kinase family.

The catalysed reaction is dTMP + ATP = dTDP + ADP. Its function is as follows. Phosphorylation of dTMP to form dTDP in both de novo and salvage pathways of dTTP synthesis. The chain is Thymidylate kinase from Cutibacterium acnes (strain DSM 16379 / KPA171202) (Propionibacterium acnes).